An 81-amino-acid chain; its full sequence is Cytotoxin 3d (81 aa).

A signal peptide spans 1–21; the sequence is MKTLLLTLVVVTIVCLDLGYT. 4 disulfide bridges follow: Cys-24-Cys-42, Cys-35-Cys-59, Cys-63-Cys-74, and Cys-75-Cys-80.

The protein belongs to the three-finger toxin family. Short-chain subfamily. Type IA cytotoxin sub-subfamily. In terms of assembly, monomer in solution; Homodimer and oligomer in the presence of negatively charged lipids forming a pore with a size ranging between 20 and 30 Angstroms. As to expression, expressed by the venom gland.

It localises to the secreted. The protein localises to the target cell membrane. Shows cytolytic activity on many different cells by forming pore in lipid membranes. In vivo, increases heart rate or kills the animal by cardiac arrest. In addition, it binds to heparin with high affinity, interacts with Kv channel-interacting protein 1 (KCNIP1) in a calcium-independent manner, and binds to integrin alpha-V/beta-3 (ITGAV/ITGB3) with moderate affinity. This Naja atra (Chinese cobra) protein is Cytotoxin 3d.